The sequence spans 168 residues: Mitochondrial inner membrane protein Mpv17 (168 aa).

A run of 4 helical transmembrane segments spans residues 12-29, 41-61, 82-101, and 144-166; these read INVAAVMCLGDTISQFFF, RTLRFGIVGLVFVGPTLRRWY, MLVDQTLFAPPFTMAMSFLV, and LGYQVLYAQFIALVWNCYLSMIL.

The protein belongs to the peroxisomal membrane protein PXMP2/4 family. In terms of assembly, part of a larger complex that may be a homohexamer.

The protein resides in the mitochondrion inner membrane. In terms of biological role, non-selective channel that modulates the membrane potential under normal conditions and oxidative stress, and is involved in mitochondrial homeostasis. Can translocate uridine, but not orotate, across a lipid membrane. Involved in maintenance of mitochondrial ultrastructure. May be involved in mitochondrial DNA (mtDNA) maintenance but does not appear to be directly involved in mitochondrial deoxynucleoside triphosphate (dNTP) pool homeostasis. May be involved in the regulation of reactive oxygen species metabolism and the control of oxidative phosphorylation. In Drosophila melanogaster (Fruit fly), this protein is Mitochondrial inner membrane protein Mpv17.